An 81-amino-acid chain; its full sequence is Putative membrane protein insertion efficiency factor (81 aa).

The segment at 59 to 81 (PWNPGGYDPVPPIKTSRSSSMAE) is disordered.

This sequence belongs to the UPF0161 family.

It localises to the cell inner membrane. In terms of biological role, could be involved in insertion of integral membrane proteins into the membrane. The protein is Putative membrane protein insertion efficiency factor of Azotobacter vinelandii (strain DJ / ATCC BAA-1303).